The sequence spans 238 residues: Probable septum site-determining protein MinC (238 aa).

This sequence belongs to the MinC family. As to quaternary structure, interacts with MinD and FtsZ.

Cell division inhibitor that blocks the formation of polar Z ring septums. Rapidly oscillates between the poles of the cell to destabilize FtsZ filaments that have formed before they mature into polar Z rings. Prevents FtsZ polymerization. The chain is Probable septum site-determining protein MinC from Xylella fastidiosa (strain M23).